The primary structure comprises 110 residues: Large ribosomal subunit protein uL22 (110 aa).

This sequence belongs to the universal ribosomal protein uL22 family. In terms of assembly, part of the 50S ribosomal subunit.

In terms of biological role, this protein binds specifically to 23S rRNA; its binding is stimulated by other ribosomal proteins, e.g. L4, L17, and L20. It is important during the early stages of 50S assembly. It makes multiple contacts with different domains of the 23S rRNA in the assembled 50S subunit and ribosome. Functionally, the globular domain of the protein is located near the polypeptide exit tunnel on the outside of the subunit, while an extended beta-hairpin is found that lines the wall of the exit tunnel in the center of the 70S ribosome. The chain is Large ribosomal subunit protein uL22 from Haemophilus ducreyi (strain 35000HP / ATCC 700724).